The primary structure comprises 262 residues: MTRKTLAIEGLTATTVIDGQQRVLVDNLSLGVQRGRILALVGASGSGKSMTCSAALGVLPPGVTASRGRVTIDGVPYAANALRGRHVATIMQNPRGAFNPVRTMRDHAIETLQALGKLSSNPQDQIVHCMRAAGLEDVKTILSLHPFEMSGGMLQRMMIALALLSEAPFLFADEPTTDLDLVVQLRVLELLEKLVEERDLGILLVTHDMGVVARLAHDVAVLDHGRLIEQAPVMDIFQTPGHEVTRMLVSAHLSLYGMELNA.

One can recognise an ABC transporter domain in the interval 6-249; that stretch reads LAIEGLTATT…PGHEVTRMLV (244 aa). 42–49 contacts ATP; the sequence is GASGSGKS.

This sequence belongs to the ABC transporter superfamily. Nickel importer (TC 3.A.1.5.3) family. The complex is composed of two ATP-binding proteins (NikD and NikE), two transmembrane proteins (NikB and NikC) and a solute-binding protein (NikA).

Its subcellular location is the cell inner membrane. It carries out the reaction Ni(2+)(out) + ATP + H2O = Ni(2+)(in) + ADP + phosphate + H(+). Its function is as follows. Part of the ABC transporter complex NikABCDE involved in nickel import. Responsible for energy coupling to the transport system. The polypeptide is Nickel import ATP-binding protein NikD (Brucella suis biovar 1 (strain 1330)).